The sequence spans 447 residues: MVYEEVSLKNLKIKNDYKSIELSEISKSDMHKRIKTFGWVDCCRTGKSITFFDLTCQFKSIKCVYEKKIDLTKCTSLTIYGTIQENKSKKENAEFEVLVEKLEIFNDAIAPSFPLNKESSFDTMMKYGHLALRNKQRGFFLKARSSLLKIIRDIFYEGNFIEITPPTIVQTQVEGGSTLFKLKYYDKDAYLTQSSQLYLETVAPVAYRAYCIASSYRAEKSNTTRHLSEYTHVEAELANIEFEDLINNIEHLVTESIKRFYDLLGDEIKDLYPEIKLQNVPKRPFKRIRYVDAIKFLNDEGVKKDDDTDFVVGDDIPDSREKIICERFGKGEPVLMTHFLVEHKPFYMKLDSSNETCTESFDLLYPGIGEIVGGSMRLDNYNKLIDGFKREGLNPEDYDWYLDMARFGPCSHGGYGLGFERLLMALMRYTNIEFATLYPRNTRRCHP.

The protein belongs to the class-II aminoacyl-tRNA synthetase family.

The protein localises to the cytoplasm. It catalyses the reaction tRNA(Asn) + L-asparagine + ATP = L-asparaginyl-tRNA(Asn) + AMP + diphosphate + H(+). The sequence is that of Probable asparagine--tRNA ligase, cytoplasmic from Vairimorpha ceranae (strain BRL01) (Microsporidian parasite).